The primary structure comprises 641 residues: Serine/threonine-protein kinase PK-1 (641 aa).

Residues 18–280 form the Protein kinase domain; it reads YRVDARIAVG…ARARDARARL (263 aa). ATP-binding positions include 24–32 and Lys47; that span reads IAVGGMATV. Asp141 acts as the Proton acceptor in catalysis. The disordered stretch occupies residues 317–347; sequence LPVNEEDEGADAAHRTSRFRSPPPLPPRGRT. 4 consecutive PASTA domains span residues 375 to 441, 442 to 508, 509 to 576, and 577 to 641; these read SGQF…TLSK, GPRT…LTVS, KGAP…TLSK, and GPEM…IEIR. The disordered stretch occupies residues 469-494; that stretch reads KPGMSTREFSDSVPAGSVISTEPGKG.

The protein belongs to the protein kinase superfamily. Ser/Thr protein kinase family. Post-translationally, autophosphorylated on threonine residue(s).

It catalyses the reaction L-seryl-[protein] + ATP = O-phospho-L-seryl-[protein] + ADP + H(+). The catalysed reaction is L-threonyl-[protein] + ATP = O-phospho-L-threonyl-[protein] + ADP + H(+). This is Serine/threonine-protein kinase PK-1 (spk1) from Streptomyces toyocaensis.